The primary structure comprises 503 residues: Potassium voltage-gated channel subfamily V member 1 (503 aa).

Disordered regions lie at residues 1 to 20 and 171 to 192; these read MDLS…DSGS and KKDT…KGPC. Topologically, residues 3–213 are cytoplasmic; it reads LSPRNRPLLD…EKPGSSTAAR (211 aa). The segment covering 10 to 20 has biased composition (low complexity); sequence LLDSSSLDSGS. The span at 171–187 shows a compositional bias: basic and acidic residues; it reads KKDTDDQESQHESEQDF. The chain crosses the membrane as a helical span at residues 214-234; the sequence is IFGVISIIFVAVSIVNMALMS. At 235 to 241 the chain is on the extracellular side; sequence AELSWLN. A helical membrane pass occupies residues 242–262; the sequence is LQLLEILEYVCISWFTGEFVL. Residues 263-279 are Cytoplasmic-facing; the sequence is RFLCVKDRCHFLRKVPN. The helical transmembrane segment at 280 to 300 threads the bilayer; it reads IIDLLAILPFYITLLVESLSG. Residues 301–312 lie on the Extracellular side of the membrane; that stretch reads SHTTQELENVGR. The chain crosses the membrane as a helical; Voltage-sensor span at residues 313 to 334; it reads LVQVLRLLRALRMLKLGRHSTG. The Cytoplasmic segment spans residues 335 to 348; that stretch reads LRSLGMTITQCYEE. A helical membrane pass occupies residues 349-369; that stretch reads VGLLLLFLSVGISIFSTIEYF. Residues 395–400 carry the Selectivity filter motif; that stretch reads TVGYGD. Residues 410-430 form a helical membrane-spanning segment; it reads IVAFMCILSGILVLALPIAII. Residues 431-503 lie on the Cytoplasmic side of the membrane; the sequence is NDRFSACYFT…RSSGGDDFWF (73 aa).

It belongs to the potassium channel family. V (TC 1.A.1.2) subfamily. Kv8.1/KCNV1 sub-subfamily. Heteromultimer with KCNB1 and KCNB2. Interacts with KCNC4 and KCND1.

The protein resides in the cell membrane. Potassium channel subunit that does not form functional channels by itself. Modulates KCNB1 and KCNB2 channel activity by shifting the threshold for inactivation to more negative values and by slowing the rate of inactivation. Can down-regulate the channel activity of KCNB1, KCNB2, KCNC4 and KCND1, possibly by trapping them in intracellular membranes. The chain is Potassium voltage-gated channel subfamily V member 1 (Kcnv1) from Mus musculus (Mouse).